Here is a 124-residue protein sequence, read N- to C-terminus: Phosphoribosyl-ATP pyrophosphatase (124 aa).

This sequence belongs to the PRA-PH family.

Its subcellular location is the cytoplasm. The enzyme catalyses 1-(5-phospho-beta-D-ribosyl)-ATP + H2O = 1-(5-phospho-beta-D-ribosyl)-5'-AMP + diphosphate + H(+). The protein operates within amino-acid biosynthesis; L-histidine biosynthesis; L-histidine from 5-phospho-alpha-D-ribose 1-diphosphate: step 2/9. In Ralstonia pickettii (strain 12J), this protein is Phosphoribosyl-ATP pyrophosphatase.